The following is a 203-amino-acid chain: dTTP/UTP pyrophosphatase (203 aa).

The Proton acceptor role is filled by aspartate 74.

Belongs to the Maf family. YhdE subfamily. The cofactor is a divalent metal cation.

The protein resides in the cytoplasm. The catalysed reaction is dTTP + H2O = dTMP + diphosphate + H(+). The enzyme catalyses UTP + H2O = UMP + diphosphate + H(+). Its function is as follows. Nucleoside triphosphate pyrophosphatase that hydrolyzes dTTP and UTP. May have a dual role in cell division arrest and in preventing the incorporation of modified nucleotides into cellular nucleic acids. This chain is dTTP/UTP pyrophosphatase, found in Treponema denticola (strain ATCC 35405 / DSM 14222 / CIP 103919 / JCM 8153 / KCTC 15104).